Reading from the N-terminus, the 153-residue chain is Protein DpnD (153 aa).

This Streptococcus pneumoniae serotype 4 (strain ATCC BAA-334 / TIGR4) protein is Protein DpnD.